Reading from the N-terminus, the 245-residue chain is Venom nerve growth factor 1 (245 aa).

An N-terminal signal peptide occupies residues 1–18; the sequence is MSMLCYTLIIAFLIGIWA. A propeptide spanning residues 19 to 125 is cleaved from the precursor; the sequence is APKSEDNVPL…ALNRNIRAKR (107 aa). Residues 47 to 66 show a composition bias toward basic and acidic residues; it reads GLKTSRNTDQRHPAPKKAED. Residues 47-69 form a disordered region; sequence GLKTSRNTDQRHPAPKKAEDQEL. Disulfide bonds link Cys-139/Cys-206, Cys-182/Cys-234, and Cys-194/Cys-236. N-linked (GlcNAc...) asparagine glycosylation is found at Asn-148 and Asn-151.

Belongs to the NGF-beta family. Homodimer; non-covalently linked. As to expression, expressed by the venom gland.

It localises to the secreted. Its function is as follows. Nerve growth factor is important for the development and maintenance of the sympathetic and sensory nervous systems. It stimulates division and differentiation of sympathetic and embryonic sensory neurons as well as basal forebrain cholinergic neurons in the brain. Its relevance in the snake venom is not clear. However, it has been shown to inhibit metalloproteinase-dependent proteolysis of platelet glycoprotein Ib alpha, suggesting a metalloproteinase inhibition to prevent metalloprotease autodigestion and/or protection against prey proteases. Binds a lipid between the two protein chains in the homodimer. The lipid-bound form promotes histamine relase from mouse mast cells, contrary to the lipid-free form. The protein is Venom nerve growth factor 1 of Tropidechis carinatus (Australian rough-scaled snake).